The sequence spans 393 residues: S-adenosylmethionine synthase 1 (393 aa).

Glu-9 lines the Mg(2+) pocket. His-15 contacts ATP. Glu-43 serves as a coordination point for K(+). Residues Glu-56 and Gln-99 each contribute to the L-methionine site. ATP contacts are provided by residues 167 to 169 (DGK), 235 to 238 (SGRF), Asp-246, 252 to 253 (RK), Ala-269, Lys-273, and Lys-277. Residue Asp-246 coordinates L-methionine. Lys-277 is a binding site for L-methionine.

It belongs to the AdoMet synthase family. Homotetramer. Requires Mn(2+) as cofactor. Mg(2+) serves as cofactor. Co(2+) is required as a cofactor. It depends on K(+) as a cofactor.

It localises to the cytoplasm. The enzyme catalyses L-methionine + ATP + H2O = S-adenosyl-L-methionine + phosphate + diphosphate. The protein operates within amino-acid biosynthesis; S-adenosyl-L-methionine biosynthesis; S-adenosyl-L-methionine from L-methionine: step 1/1. Its function is as follows. Catalyzes the formation of S-adenosylmethionine from methionine and ATP. The reaction comprises two steps that are both catalyzed by the same enzyme: formation of S-adenosylmethionine (AdoMet) and triphosphate, and subsequent hydrolysis of the triphosphate. The polypeptide is S-adenosylmethionine synthase 1 (SAMS1) (Brassica juncea (Indian mustard)).